Reading from the N-terminus, the 963-residue chain is Seizure 6-like protein (963 aa).

An N-terminal signal peptide occupies residues 1 to 31 (MPVARPQAAGPDRISLFLVAFLLGSPAAAQA). Disordered stretches follow at residues 28–63 (AAQAEDGGPEGEMHPSTAYLLPSASLESSLEEGVTS), 116–150 (RPLATPTTLQRLGSPASATTKLREPEDPEQPTAPA), and 164–204 (LPHS…TTTS). Residues 32–897 (EDGGPEGEMH…ESSLEGGNMA (866 aa)) lie on the Extracellular side of the membrane. A compositionally biased stretch (low complexity) spans 47 to 59 (LLPSASLESSLEE). Polar residues predominate over residues 120-135 (TPTTLQRLGSPASATT). The span at 191–204 (TGSASEESQETTTS) shows a compositional bias: low complexity. A disulfide bond links C221 and C248. The CUB 1 domain occupies 221 to 329 (CGVSFSDPEG…GTFQLHYQAF (109 aa)). N251, N268, and N290 each carry an N-linked (GlcNAc...) asparagine glycan. Residues 331–390 (LSCPFPRRPDAGEVTVMDLHSGGVAHFHCHLGYELQGAKTLTCINASKPHWSSQEPVCSA) enclose the Sushi 1 domain. 3 disulfides stabilise this stretch: C333-C373, C359-C388, and C392-C419. N375, N398, N414, N454, N516, and N558 each carry an N-linked (GlcNAc...) asparagine glycan. Residues 392-502 (CGGAVHNATI…SAFNIRFEAF (111 aa)) enclose the CUB 2 domain. The Sushi 2 domain maps to 505-566 (GHCYEPYIQN…WNDTEPLCRA (62 aa)). Cystine bridges form between C507/C549, C534/C564, and C568/C594. One can recognise a CUB 3 domain in the interval 568-679 (CGGELSAVAG…QGFIMNYIEV (112 aa)). N-linked (GlcNAc...) asparagine glycosylation is found at N614 and N682. 3 consecutive Sushi domains span residues 683–742 (DSCS…FCEK), 744–807 (MYCT…HCVS), and 811–872 (LACD…ICKV). 6 cysteine pairs are disulfide-bonded: C685-C727, C713-C740, C746-C788, C774-C805, C813-C855, and C841-C870. A helical transmembrane segment spans residues 898 to 918 (LAIFIPVLLISLLLGGAYIYV). Over 919-963 (TRCRQYSSLRLPLMYSHPYSQITVETEFDNPIYETGETREYEVSI) the chain is Cytoplasmic.

Belongs to the SEZ6 family. Expressed exclusively in the brain, predominantly in neurons. Wide expression in the gray matter of the brain with high levels in the olfactory bulb, anterior olfactory nuclei, hippocampal formation and cerebellar cortex. Detected diffusely and weakly in the white matter, such as the corpus callosum and cerebellar medulla. In the cerebellar cortex, intensely expressed in Purkinje cells and granule cells. Detected also in interneurons in the molecular layer.

The protein resides in the cell membrane. It localises to the endoplasmic reticulum membrane. Candidate tumor suppressor gene. May contribute to specialized endoplasmic reticulum functions in neurons. The protein is Seizure 6-like protein (Sez6l) of Mus musculus (Mouse).